A 270-amino-acid chain; its full sequence is Nuclease PA3 (270 aa).

Residues Trp1, His6, His15, Asp45, and His60 each coordinate a divalent metal cation. 1-6 (WGALGH) serves as a coordination point for substrate. Residues 45 to 51 (DEYRLTS), 60 to 63 (HFID), and 73 to 78 (NVDYER) each bind substrate. 2 disulfide bridges follow: Cys72-Cys217 and Cys80-Cys85. Asn92 contributes to the substrate binding site. Asn92 carries an N-linked (GlcNAc...) asparagine glycan. Residues His116, Asp120, and His126 each coordinate a divalent metal cation. The segment at 116-164 (HFIGDMTQPLHDEAYAVGGNKINVTFDGYHDNLHSDWDTYMPQKLIGGH) is substrate binding. Asn138 is a glycosylation site (N-linked (GlcNAc...) asparagine). Positions 149 and 153 each coordinate a divalent metal cation. N-linked (GlcNAc...) asparagine glycans are attached at residues Asn184 and Asn197.

Belongs to the nuclease type I family. Zn(2+) serves as cofactor.

The protein resides in the secreted. It carries out the reaction a ribonucleoside 3'-phosphate + H2O = a ribonucleoside + phosphate. Its function is as follows. Hydrolyzes only single-stranded DNA and RNA without apparent specificity for bases. This is Nuclease PA3 from Penicillium sp.